Here is a 196-residue protein sequence, read N- to C-terminus: Zinc metalloproteinase-disintegrin-like bothrojarin-3 (196 aa).

Positions 2-88 (PPVCGTELLE…DCPTDDIQRN (87 aa)) constitute a Disintegrin domain. Ca(2+) is bound by residues Val4, Leu9, Glu11, Glu14, and Asp17. Cystine bridges form between Cys5–Cys34, Cys16–Cys29, Cys18–Cys24, Cys28–Cys51, Cys42–Cys48, Cys47–Cys73, Cys60–Cys80, Cys67–Cys99, Cys92–Cys104, Cys111–Cys161, Cys126–Cys168, Cys139–Cys149, and Cys156–Cys193. A D/ECD-tripeptide motif is present at residues 66–68 (ECD).

This sequence belongs to the venom metalloproteinase (M12B) family. P-III subfamily. P-IIIa sub-subfamily. In terms of assembly, monomer. Zn(2+) serves as cofactor. In terms of processing, glycosylated. As to expression, expressed by the venom gland.

Its subcellular location is the secreted. Its function is as follows. The hemorrhagic metalloproteinase-disintegrin-like bothrojarin-1 is a potent inhibitor of collagen-induced platelet aggregation by blockage of alpha-2/beta-1 (ITGA2/ITGB1) integrin. It does not present any fibrinogen-clotting activity. In Bothrops jararaca (Jararaca), this protein is Zinc metalloproteinase-disintegrin-like bothrojarin-3.